We begin with the raw amino-acid sequence, 328 residues long: GTP cyclohydrolase MptA (328 aa).

It belongs to the GTP cyclohydrolase IV family. In terms of assembly, homodimer. Fe(2+) serves as cofactor.

It catalyses the reaction GTP + H2O = 7,8-dihydroneopterin 2',3'-cyclic phosphate + formate + diphosphate + H(+). Its pathway is cofactor biosynthesis; 5,6,7,8-tetrahydromethanopterin biosynthesis. Functionally, converts GTP to 7,8-dihydro-D-neopterin 2',3'-cyclic phosphate, the first intermediate in the biosynthesis of coenzyme methanopterin. This is GTP cyclohydrolase MptA from Methanospirillum hungatei JF-1 (strain ATCC 27890 / DSM 864 / NBRC 100397 / JF-1).